A 193-amino-acid chain; its full sequence is Adenylate kinase (193 aa).

Residue 10 to 15 participates in ATP binding; that stretch reads GAGKGT. Residues 30-59 form an NMP region; the sequence is STGDMLRAAVKAGTPIGLKAKAVMDAGGLV. AMP is bound by residues Thr31, Arg36, 57 to 59, 85 to 88, and Gln92; these read GLV and GFPR. The segment at 126–142 is LID; it reads KRAKETLAAGGTVRADD. Residue Arg127 coordinates ATP. The AMP site is built by Arg139 and Arg150. Ala178 is an ATP binding site.

Belongs to the adenylate kinase family. As to quaternary structure, monomer.

Its subcellular location is the cytoplasm. It catalyses the reaction AMP + ATP = 2 ADP. Its pathway is purine metabolism; AMP biosynthesis via salvage pathway; AMP from ADP: step 1/1. Catalyzes the reversible transfer of the terminal phosphate group between ATP and AMP. Plays an important role in cellular energy homeostasis and in adenine nucleotide metabolism. The protein is Adenylate kinase of Beijerinckia indica subsp. indica (strain ATCC 9039 / DSM 1715 / NCIMB 8712).